The following is a 124-amino-acid chain: Fluoride-specific ion channel FluC (124 aa).

The next 3 helical transmembrane spans lie at leucine 5 to glutamine 27, valine 70 to isoleucine 90, and tryptophan 95 to leucine 115. Na(+) contacts are provided by glycine 74 and threonine 77.

Belongs to the fluoride channel Fluc/FEX (TC 1.A.43) family.

The protein localises to the cell inner membrane. The enzyme catalyses fluoride(in) = fluoride(out). With respect to regulation, na(+) is not transported, but it plays an essential structural role and its presence is essential for fluoride channel function. Its function is as follows. Fluoride-specific ion channel. Important for reducing fluoride concentration in the cell, thus reducing its toxicity. This Shewanella sediminis (strain HAW-EB3) protein is Fluoride-specific ion channel FluC.